A 216-amino-acid chain; its full sequence is LexA repressor (216 aa).

The segment at residues 28–48 (RAEIAAELGFSSANSAEEHLR) is a DNA-binding region (H-T-H motif). Active-site for autocatalytic cleavage activity residues include serine 134 and lysine 171.

This sequence belongs to the peptidase S24 family. In terms of assembly, homodimer.

The enzyme catalyses Hydrolysis of Ala-|-Gly bond in repressor LexA.. Represses a number of genes involved in the response to DNA damage (SOS response), including recA and lexA. In the presence of single-stranded DNA, RecA interacts with LexA causing an autocatalytic cleavage which disrupts the DNA-binding part of LexA, leading to derepression of the SOS regulon and eventually DNA repair. The protein is LexA repressor of Paraburkholderia phytofirmans (strain DSM 17436 / LMG 22146 / PsJN) (Burkholderia phytofirmans).